Consider the following 297-residue polypeptide: Cyclin-dependent kinase 1 (297 aa).

Residues 4-293 (YQKVEKIGEG…AKRALQQNYL (290 aa)) enclose the Protein kinase domain. ATP is bound by residues 10–18 (IGEGTYGVV) and Lys33. Thr14 carries the post-translational modification Phosphothreonine. Position 15 is a phosphotyrosine (Tyr15). Asp134 acts as the Proton acceptor in catalysis. The residue at position 167 (Thr167) is a Phosphothreonine.

Belongs to the protein kinase superfamily. CMGC Ser/Thr protein kinase family. CDC2/CDKX subfamily. Forms a stable but non-covalent complex with regulatory subunit suc1 and with a cyclin. Interacts with cyclin cdc13. Interacts with cyclin cig2. Interacts with cdc37.

It localises to the cytoplasm. The catalysed reaction is L-seryl-[protein] + ATP = O-phospho-L-seryl-[protein] + ADP + H(+). It catalyses the reaction L-threonyl-[protein] + ATP = O-phospho-L-threonyl-[protein] + ADP + H(+). Phosphorylation at Thr-14 or Tyr-15 inactivates the enzyme, while phosphorylation at Thr-167 activates it. Functionally, cyclin-dependent kinase that acts as a master regulator of the mitotic and meiotic cell cycles. Required to drive the G1-S and G2-M transitions, and initiation of premeiotic DNA replication and meiosis II. More than 200 substrates have been identified. Substrate specificity is in part regulated by the bound cyclin protein. When complexed with cyclin cig2, it drives the G1-S phase transition. When complexed with cyclin cdc13, it drives the G2-M transition and initiation of meiosis II. Its activity rises throughout the cell cycle and substrate specificity is further influenced by activity thresholds with more sensitive substrates phosphorylated earlier in the cell cycle than less sensitive substrates. Phosphorylates dis1 during metaphase to ensure proper microtubule dynamics and accurate chromosome segregation. Phosphorylates the repetitive C-terminus of the large subunit of RNA polymerase II rpb1. Inactivated by checkpoint signaling following detection of cellular damage, leading to cell cycle arrest to allow damage repair. Inactivated during G2 DNA damage checkpoint signaling. Inactivated in response to defective RNA splicing. In Schizosaccharomyces pombe (strain 972 / ATCC 24843) (Fission yeast), this protein is Cyclin-dependent kinase 1.